Reading from the N-terminus, the 654-residue chain is Translation factor GUF1, mitochondrial (654 aa).

Positions 57–237 (ENYRNFSIVA…SVIKNIPSPV (181 aa)) constitute a tr-type G domain. Residues 66–73 (AHVDHGKS), 130–134 (DTPGH), and 184–187 (NKID) contribute to the GTP site.

It belongs to the TRAFAC class translation factor GTPase superfamily. Classic translation factor GTPase family. LepA subfamily.

It localises to the mitochondrion inner membrane. The catalysed reaction is GTP + H2O = GDP + phosphate + H(+). Its function is as follows. Promotes mitochondrial protein synthesis. May act as a fidelity factor of the translation reaction, by catalyzing a one-codon backward translocation of tRNAs on improperly translocated ribosomes. Binds to mitochondrial ribosomes in a GTP-dependent manner. This chain is Translation factor GUF1, mitochondrial, found in Candida albicans (strain SC5314 / ATCC MYA-2876) (Yeast).